A 255-amino-acid polypeptide reads, in one-letter code: uncharacterized protein (255 aa).

The short motif at 253-255 is the Microbody targeting signal element; it reads SKI.

This sequence belongs to the enoyl-CoA hydratase/isomerase family.

The protein resides in the peroxisome. This is an uncharacterized protein from Caenorhabditis elegans.